Here is a 495-residue protein sequence, read N- to C-terminus: ATP synthase subunit beta, chloroplastic (495 aa).

ATP is bound at residue 172–179 (GGAGVGKT).

It belongs to the ATPase alpha/beta chains family. In terms of assembly, F-type ATPases have 2 components, CF(1) - the catalytic core - and CF(0) - the membrane proton channel. CF(1) has five subunits: alpha(3), beta(3), gamma(1), delta(1), epsilon(1). CF(0) has four main subunits: a(1), b(1), b'(1) and c(9-12).

Its subcellular location is the plastid. It localises to the chloroplast thylakoid membrane. It carries out the reaction ATP + H2O + 4 H(+)(in) = ADP + phosphate + 5 H(+)(out). Its function is as follows. Produces ATP from ADP in the presence of a proton gradient across the membrane. The catalytic sites are hosted primarily by the beta subunits. This is ATP synthase subunit beta, chloroplastic from Brimeura amethystina (Spanish hyacinth).